The following is a 494-amino-acid chain: Glutamate--tRNA ligase (494 aa).

Positions 10-20 (PSPTGDPHVGT) match the 'HIGH' region motif. The Zn(2+) site is built by Cys-107, Cys-109, Cys-134, and His-136. The 'KMSKS' region motif lies at 251–255 (KLSKR). Lys-254 is a binding site for ATP.

Belongs to the class-I aminoacyl-tRNA synthetase family. Glutamate--tRNA ligase type 1 subfamily. As to quaternary structure, monomer. It depends on Zn(2+) as a cofactor.

Its subcellular location is the cytoplasm. The catalysed reaction is tRNA(Glu) + L-glutamate + ATP = L-glutamyl-tRNA(Glu) + AMP + diphosphate. Its function is as follows. Catalyzes the attachment of glutamate to tRNA(Glu) in a two-step reaction: glutamate is first activated by ATP to form Glu-AMP and then transferred to the acceptor end of tRNA(Glu). The sequence is that of Glutamate--tRNA ligase from Pseudomonas aeruginosa (strain UCBPP-PA14).